The following is a 96-amino-acid chain: Integration host factor subunit beta (96 aa).

The protein belongs to the bacterial histone-like protein family. Heterodimer of an alpha and a beta chain.

In terms of biological role, this protein is one of the two subunits of integration host factor, a specific DNA-binding protein that functions in genetic recombination as well as in transcriptional and translational control. In Methylocella silvestris (strain DSM 15510 / CIP 108128 / LMG 27833 / NCIMB 13906 / BL2), this protein is Integration host factor subunit beta.